Here is a 413-residue protein sequence, read N- to C-terminus: Serine--tRNA ligase (413 aa).

Residue 221–223 (TAE) participates in L-serine binding. 252–254 (RRE) is a binding site for ATP. Glu275 serves as a coordination point for L-serine. ATP is bound at residue 339–342 (EVSS). Residue Ser375 participates in L-serine binding.

The protein belongs to the class-II aminoacyl-tRNA synthetase family. Type-1 seryl-tRNA synthetase subfamily. In terms of assembly, homodimer. The tRNA molecule binds across the dimer.

It localises to the cytoplasm. The enzyme catalyses tRNA(Ser) + L-serine + ATP = L-seryl-tRNA(Ser) + AMP + diphosphate + H(+). It carries out the reaction tRNA(Sec) + L-serine + ATP = L-seryl-tRNA(Sec) + AMP + diphosphate + H(+). The protein operates within aminoacyl-tRNA biosynthesis; selenocysteinyl-tRNA(Sec) biosynthesis; L-seryl-tRNA(Sec) from L-serine and tRNA(Sec): step 1/1. Its function is as follows. Catalyzes the attachment of serine to tRNA(Ser). Is also able to aminoacylate tRNA(Sec) with serine, to form the misacylated tRNA L-seryl-tRNA(Sec), which will be further converted into selenocysteinyl-tRNA(Sec). The sequence is that of Serine--tRNA ligase from Dehalococcoides mccartyi (strain ATCC BAA-2100 / JCM 16839 / KCTC 5957 / BAV1).